The following is a 579-amino-acid chain: Membrane protein insertase YidC (579 aa).

Residues 10-30 form a helical membrane-spanning segment; it reads LVIVTILSALILFGWSFVTKH. Positions 35 to 61 are disordered; sequence PPAPTQQGKNQPKAELTAEESGDKPLK. The next 5 membrane-spanning stretches (helical) occupy residues 330-350, 351-371, 423-443, 478-498, and 523-543; these read FDKA…FYYL, DWLF…VFTI, VNPF…IALY, LLHF…ILGI, and PLIS…YYIF. Over residues 560–572 the composition is skewed to basic and acidic residues; sequence STPEERQDRAERK. The tract at residues 560 to 579 is disordered; sequence STPEERQDRAERKRPSKKKA.

The protein belongs to the OXA1/ALB3/YidC family. Type 1 subfamily. In terms of assembly, interacts with the Sec translocase complex via SecD. Specifically interacts with transmembrane segments of nascent integral membrane proteins during membrane integration.

The protein localises to the cell inner membrane. Its function is as follows. Required for the insertion and/or proper folding and/or complex formation of integral membrane proteins into the membrane. Involved in integration of membrane proteins that insert both dependently and independently of the Sec translocase complex, as well as at least some lipoproteins. Aids folding of multispanning membrane proteins. This chain is Membrane protein insertase YidC, found in Zymomonas mobilis subsp. mobilis (strain ATCC 31821 / ZM4 / CP4).